Reading from the N-terminus, the 449-residue chain is MHDRTFHIETFGCQMNVNDSDWLARALMERGFSPAPFGEARLTIVNTCSVRDKPEQKVYSLLGRIRQATSKKPDAFVAVGGCVAQQIGSGFFSRFPQVRLVFGTDGLAMAPQALDRLVEEPDLKLSLLDFSEDYPERDAVLGQGAVPASVFVNIMQGCDNFCAYCIVPYTRGRQKSRATGTILDECRALLDRGAREITLLGQNVNSFGQDSHGDGTTFAQLLHKVAALPGLERLRFVTPHPKDIAPEVVEAFGTLPNLCPRLHLPLQAGSDRILKLMGRRYDMARYLRIVDDLRAARPDIVLSSDIIVGFPGETEEDFMETMDALETVGYAASYSFCYSDRPGTRAEMLPDKLSREVKLERLERLQTLQNRLTERCLQDMVGRKVEVLLEGMSRKPGDEGDSWQGRDPYGNLVNVALPQGSDVRGRFLPVVVAQAKKHSLLAEQAGAPW.

The MTTase N-terminal domain maps to 4-119 (RTFHIETFGC…APQALDRLVE (116 aa)). The [4Fe-4S] cluster site is built by C13, C48, C82, C158, C162, and C165. The Radical SAM core domain occupies 144–375 (GAVPASVFVN…QTLQNRLTER (232 aa)). The 69-residue stretch at 378-446 (QDMVGRKVEV…KHSLLAEQAG (69 aa)) folds into the TRAM domain.

The protein belongs to the methylthiotransferase family. MiaB subfamily. Monomer. Requires [4Fe-4S] cluster as cofactor.

It localises to the cytoplasm. It carries out the reaction N(6)-dimethylallyladenosine(37) in tRNA + (sulfur carrier)-SH + AH2 + 2 S-adenosyl-L-methionine = 2-methylsulfanyl-N(6)-dimethylallyladenosine(37) in tRNA + (sulfur carrier)-H + 5'-deoxyadenosine + L-methionine + A + S-adenosyl-L-homocysteine + 2 H(+). Its function is as follows. Catalyzes the methylthiolation of N6-(dimethylallyl)adenosine (i(6)A), leading to the formation of 2-methylthio-N6-(dimethylallyl)adenosine (ms(2)i(6)A) at position 37 in tRNAs that read codons beginning with uridine. The protein is tRNA-2-methylthio-N(6)-dimethylallyladenosine synthase of Nitratidesulfovibrio vulgaris (strain ATCC 29579 / DSM 644 / CCUG 34227 / NCIMB 8303 / VKM B-1760 / Hildenborough) (Desulfovibrio vulgaris).